Here is a 122-residue protein sequence, read N- to C-terminus: Large ribosomal subunit protein uL14 (122 aa).

This sequence belongs to the universal ribosomal protein uL14 family. As to quaternary structure, part of the 50S ribosomal subunit. Forms a cluster with proteins L3 and L19. In the 70S ribosome, L14 and L19 interact and together make contacts with the 16S rRNA in bridges B5 and B8.

Functionally, binds to 23S rRNA. Forms part of two intersubunit bridges in the 70S ribosome. This is Large ribosomal subunit protein uL14 from Lacticaseibacillus casei (strain BL23) (Lactobacillus casei).